Here is a 320-residue protein sequence, read N- to C-terminus: Uroplakin-3b (320 aa).

Positions 1 to 29 (MGLPWGQPHLGLQMLLLALNCLRPSLSLG) are cleaved as a signal peptide. Residues 30–240 (EWGSWMDASS…LHPLFSGRPP (211 aa)) are Lumenal-facing. The N-linked (GlcNAc...) asparagine glycan is linked to Asn-133. Residues 241-266 (TLGLLGSLYHALLQPVVAGGGPGAAA) traverse the membrane as a helical segment. Topologically, residues 267 to 320 (DRLLHGQALHDPPHPTQRGRHTAGGLQAWPGPPPQPQPLAWPLCMGLGEMGRWE) are cytoplasmic. Residues 273-303 (QALHDPPHPTQRGRHTAGGLQAWPGPPPQPQ) form a disordered region.

This sequence belongs to the uroplakin-3 family. In terms of assembly, heterodimer with uroplakin-1B (UPK1B).

The protein localises to the cell membrane. In terms of biological role, component of the asymmetric unit membrane (AUM); a highly specialized biomembrane elaborated by terminally differentiated urothelial cells. May play an important role in AUM-cytoskeleton interaction in terminally differentiated urothelial cells. It also contributes to the formation of urothelial glycocalyx which may play an important role in preventing bacterial adherence. The chain is Uroplakin-3b (UPK3B) from Homo sapiens (Human).